Here is a 225-residue protein sequence, read N- to C-terminus: 3-dehydroquinate dehydratase (225 aa).

Residues serine 6, 30-32 (EWR), and arginine 62 contribute to the 3-dehydroquinate site. Residue histidine 118 is the Proton donor/acceptor of the active site. Residue lysine 143 is the Schiff-base intermediate with substrate of the active site. Residues arginine 186, serine 205, and glutamine 209 each coordinate 3-dehydroquinate.

It belongs to the type-I 3-dehydroquinase family. As to quaternary structure, homodimer.

It carries out the reaction 3-dehydroquinate = 3-dehydroshikimate + H2O. It functions in the pathway metabolic intermediate biosynthesis; chorismate biosynthesis; chorismate from D-erythrose 4-phosphate and phosphoenolpyruvate: step 3/7. In terms of biological role, involved in the third step of the chorismate pathway, which leads to the biosynthesis of aromatic amino acids. Catalyzes the cis-dehydration of 3-dehydroquinate (DHQ) and introduces the first double bond of the aromatic ring to yield 3-dehydroshikimate. This Streptococcus pneumoniae (strain Hungary19A-6) protein is 3-dehydroquinate dehydratase.